We begin with the raw amino-acid sequence, 519 residues long: Bud site selection protein 22 (519 aa).

Residues 241 to 497 (EKTANANQTH…STGEEHPSWI (257 aa)) form a disordered region. A compositionally biased stretch (polar residues) spans 244–254 (ANANQTHSNID). Thr-257 is subject to Phosphothreonine. Polar residues predominate over residues 267-282 (DSKSNAIGAQTQSNKE). Residues 321–337 (VTDEEPSEASSDEDDSD) show a composition bias toward acidic residues. The segment covering 338-348 (ERFSDSEENEP) has biased composition (basic and acidic residues). A Phosphoserine modification is found at Ser-367. Thr-371 is modified (phosphothreonine). Ser-375 carries the phosphoserine modification. The segment covering 407–420 (RKNRRGQRARRKIW) has biased composition (basic residues). A coiled-coil region spans residues 426-470 (SQAKHVQRELEKEMEDRKQRQIEYEARVAKREAKAASLEASRSRE). Basic and acidic residues-rich tracts occupy residues 431-459 (VQRE…REAK) and 466-497 (SRSR…PSWI).

Belongs to the BUD22 family.

The protein localises to the nucleus. Its function is as follows. Involved in positioning the proximal bud pole signal. This is Bud site selection protein 22 (BUD22) from Saccharomyces cerevisiae (strain ATCC 204508 / S288c) (Baker's yeast).